The sequence spans 146 residues: Hemoglobin subunit beta (146 aa).

In terms of domain architecture, Globin spans 2–146 (HWSAEEKQLI…VAHALARKYH (145 aa)). 2 residues coordinate heme b: histidine 63 and histidine 92.

It belongs to the globin family. Heterotetramer of two alpha chains and two beta chains. In terms of tissue distribution, red blood cells.

Its function is as follows. Involved in oxygen transport from the lung to the various peripheral tissues. This chain is Hemoglobin subunit beta (HBB), found in Streptopelia orientalis (Eastern turtle dove).